A 475-amino-acid polypeptide reads, in one-letter code: FAD-dependent monooxygenase janM (475 aa).

A helical membrane pass occupies residues 8-24 (VIIVGGSIGGLTLAHCL). Residues glutamate 35, glycine 49, and arginine 108 each coordinate FAD. The N-linked (GlcNAc...) asparagine glycan is linked to asparagine 147. Aspartate 299 and alanine 312 together coordinate FAD. The chain crosses the membrane as a helical span at residues 432–451 (GWRFHAMLCILMLAILYTWV).

This sequence belongs to the paxM FAD-dependent monooxygenase family. FAD serves as cofactor.

Its subcellular location is the membrane. It participates in secondary metabolite biosynthesis. FAD-dependent monooxygenase; part of the gene cluster that mediates the biosynthesis of the indole diterpenes janthitremanes such as shearinine K or shearinine A. The geranylgeranyl diphosphate (GGPP) synthase janG catalyzes the first step in janthitremane biosynthesis via conversion of farnesyl pyrophosphate and isopentyl pyrophosphate into geranylgeranyl pyrophosphate (GGPP). Condensation of indole-3-glycerol phosphate with GGPP by the prenyl transferase janC then forms 3-geranylgeranylindole (3-GGI). Epoxidation by the FAD-dependent monooxygenase janM leads to a epoxidized-GGI that is substrate of the terpene cyclase janB for cyclization to yield paspaline. Paspaline is subsequently converted to 13-desoxypaspaline by the cytochrome P450 monooxygenase janP, via beta-PC-M6 in a series of alpha-face oxidations. The cytochrome P450 monooxygenase janQ is proposed to carry out sequential beta-face oxidation steps at C-7 and C-13 of 13-desoxypaspaline to form paspalicine and paspalinine respectively. The indole diterpene prenyltransferase janD may then convert paspalinine into shearinine K which is substrate of janO and/or additional enzymes for oxidation and cyclization to generate shearinine A. This is FAD-dependent monooxygenase janM from Penicillium janthinellum (Penicillium vitale).